A 236-amino-acid polypeptide reads, in one-letter code: MQQNTNVDPLEIAKFERMAETWWDLNGEFKPLHLLNPLRLNYIDQTAGGIFGKKVLDVGCGGGILSESMARIGAIVHGLDMGEEPLEVARLHALETGVSINYVKNTAEAHREEHREYYDVVTCMEMLEHVPDPQSVIQACCDMVKPGGFVFFSTINRNIKSFVETIIGAEYLLKMLPIGTHDHNKFIKPSELMALVDNTDLLCKDALGITYNPLTGIFKYTPKVDVNYMIATQKVD.

S-adenosyl-L-methionine is bound by residues Arg39, Gly59, Asp80, and Met124.

It belongs to the methyltransferase superfamily. UbiG/COQ3 family.

The catalysed reaction is a 3-demethylubiquinol + S-adenosyl-L-methionine = a ubiquinol + S-adenosyl-L-homocysteine + H(+). The enzyme catalyses a 3-(all-trans-polyprenyl)benzene-1,2-diol + S-adenosyl-L-methionine = a 2-methoxy-6-(all-trans-polyprenyl)phenol + S-adenosyl-L-homocysteine + H(+). The protein operates within cofactor biosynthesis; ubiquinone biosynthesis. In terms of biological role, O-methyltransferase that catalyzes the 2 O-methylation steps in the ubiquinone biosynthetic pathway. The polypeptide is Ubiquinone biosynthesis O-methyltransferase (Shewanella sp. (strain ANA-3)).